We begin with the raw amino-acid sequence, 234 residues long: LexA repressor (234 aa).

Residues 26-46 (FDEMKTALELTSKSGIHRLIT) constitute a DNA-binding region (H-T-H motif). Active-site for autocatalytic cleavage activity residues include S155 and K193.

The protein belongs to the peptidase S24 family. In terms of assembly, homodimer.

It catalyses the reaction Hydrolysis of Ala-|-Gly bond in repressor LexA.. Represses a number of genes involved in the response to DNA damage (SOS response), including recA and lexA. In the presence of single-stranded DNA, RecA interacts with LexA causing an autocatalytic cleavage which disrupts the DNA-binding part of LexA, leading to derepression of the SOS regulon and eventually DNA repair. In Bartonella henselae (strain ATCC 49882 / DSM 28221 / CCUG 30454 / Houston 1) (Rochalimaea henselae), this protein is LexA repressor.